Consider the following 87-residue polypeptide: Antitoxin epsilon (87 aa).

This sequence belongs to the epsilon antitoxin family. In terms of assembly, in the presence of the zeta toxin, forms an inactive PezA(2)PezT(2) heterotetramer.

In terms of biological role, antitoxin component of a type II toxin-antitoxin (TA) system. Neutralizes the toxic effect of cognate zeta toxin. Part of a postsegregational killing (PSK) system involved in the killing of plasmid-free cells. Continuous synthesis of the epsilon antitoxin is required to counteract the zeta toxin. In Lactococcus lactis subsp. lactis (Streptococcus lactis), this protein is Antitoxin epsilon.